The primary structure comprises 163 residues: RxLR effector protein PITG_13625 (163 aa).

The signal sequence occupies residues 1–23; it reads MKVSKAIVALAALCMALLAPAAG. The short motif at 37 to 52 is the RxLR-dEER element; it reads RHLRQESAELATTPEE.

Belongs to the RxLR effector family.

The protein localises to the secreted. The protein resides in the host cell membrane. Functionally, effector that enhances P.infestans colonization of Nicotiana benthamiana leaves. The protein is RxLR effector protein PITG_13625 of Phytophthora infestans (strain T30-4) (Potato late blight agent).